Consider the following 463-residue polypeptide: Putative ankyrin repeat protein R579 (463 aa).

ANK repeat units follow at residues 124 to 154, 156 to 181, 242 to 271, 273 to 299, 300 to 328, 329 to 355, 356 to 385, and 387 to 416; these read LKTDLMFYAVSKNVSIDVINFLIDMDCKCTI, SITRAIAEKKLDIAKIIIDHNPSENI, KEKNISSYVIQSNSLNVVKTFVEHGLQFNP, IYLWVNGNSESENIVRYIIELGIDYRP, HIDRLLKICITSGTFSHLEYLINLGVSQE, NINEAFLTAVSEDKFELIKYLIYMGAD, INYKNTIAASYTDNIDVLKYLIEKGADITT, and GSNDVINHAIGSHQSDFCRCLLENGATITL.

The protein is Putative ankyrin repeat protein R579 of Acanthamoeba polyphaga (Amoeba).